The sequence spans 248 residues: tRNA (guanine-N(1)-)-methyltransferase (248 aa).

S-adenosyl-L-methionine is bound by residues Gly-113 and 133 to 138; that span reads LGDFVL.

Belongs to the RNA methyltransferase TrmD family. In terms of assembly, homodimer.

It localises to the cytoplasm. The catalysed reaction is guanosine(37) in tRNA + S-adenosyl-L-methionine = N(1)-methylguanosine(37) in tRNA + S-adenosyl-L-homocysteine + H(+). Specifically methylates guanosine-37 in various tRNAs. In Albidiferax ferrireducens (strain ATCC BAA-621 / DSM 15236 / T118) (Rhodoferax ferrireducens), this protein is tRNA (guanine-N(1)-)-methyltransferase.